The chain runs to 523 residues: Jerky protein homolog-like (523 aa).

Positions 1–52 constitute an HTH psq-type domain; it reads MSGKRKRVVLTIKDKLDIIKKLEDGGSSKQLAVIYGIGETTVRDIRKNKEKI. DNA-binding regions (H-T-H motif) lie at residues 28-48 and 100-132; these read SKQL…IRKN and PICA…FKQR. The HTH CENPB-type domain occupies 67–139; sequence KRKSMKPSMY…KQRHSIREIN (73 aa). Residues 168 to 385 enclose the DDE-1 domain; sequence LQPEQIYNAD…VKPVTISRAW (218 aa).

This sequence belongs to the tigger transposable element derived protein family.

It localises to the nucleus. In Mus musculus (Mouse), this protein is Jerky protein homolog-like (Jrkl).